The chain runs to 474 residues: Alanine/serine racemase (474 aa).

Pyridoxal 5'-phosphate-binding positions include 139-140 and Gln282; that span reads GS. Lys308 is subject to N6-(pyridoxal phosphate)lysine. A pyridoxal 5'-phosphate-binding site is contributed by Thr336.

Belongs to the class-III pyridoxal-phosphate-dependent aminotransferase family. In terms of assembly, homohexamer. The cofactor is pyridoxal 5'-phosphate.

It carries out the reaction L-alanine = D-alanine. It catalyses the reaction L-serine = D-serine. With respect to regulation, completely inhibited by hydroxylamine hydrochloride. Functionally, catalyzes the interconversion of L-alanine and D-alanine, and L-serine and D-serine. Has weak activity with valine and threonine. This chain is Alanine/serine racemase, found in Pyrococcus horikoshii (strain ATCC 700860 / DSM 12428 / JCM 9974 / NBRC 100139 / OT-3).